Reading from the N-terminus, the 141-residue chain is Large ribosomal subunit protein uL11 (141 aa).

Belongs to the universal ribosomal protein uL11 family. Part of the ribosomal stalk of the 50S ribosomal subunit. Interacts with L10 and the large rRNA to form the base of the stalk. L10 forms an elongated spine to which L12 dimers bind in a sequential fashion forming a multimeric L10(L12)X complex. One or more lysine residues are methylated.

Its function is as follows. Forms part of the ribosomal stalk which helps the ribosome interact with GTP-bound translation factors. The protein is Large ribosomal subunit protein uL11 of Chlorobium chlorochromatii (strain CaD3).